A 421-amino-acid polypeptide reads, in one-letter code: Polymerase delta-interacting protein 3 (421 aa).

An N-acetylalanine modification is found at alanine 2. Serine 5 bears the Phosphoserine mark. Arginine 33 carries the post-translational modification Omega-N-methylarginine. Phosphoserine is present on residues serine 44 and serine 127. Position 140 is a phosphothreonine (threonine 140). A Glycyl lysine isopeptide (Lys-Gly) (interchain with G-Cter in SUMO2) cross-link involves residue lysine 200. Serine 204, serine 215, and serine 217 each carry phosphoserine. Lysine 223 participates in a covalent cross-link: Glycyl lysine isopeptide (Lys-Gly) (interchain with G-Cter in SUMO2). Serine 244 is subject to Phosphoserine. Residue lysine 248 forms a Glycyl lysine isopeptide (Lys-Gly) (interchain with G-Cter in SUMO2) linkage. Serine 275 is subject to Phosphoserine. The RRM domain maps to threonine 280–asparagine 351. Residues serine 370–arginine 379 are compositionally biased toward basic and acidic residues. Positions serine 370–valine 393 are disordered. Residue lysine 372 forms a Glycyl lysine isopeptide (Lys-Gly) (interchain with G-Cter in SUMO2) linkage. Phosphoserine; by RPS6KB1 occurs at positions 383 and 385. Lysine 418 participates in a covalent cross-link: Glycyl lysine isopeptide (Lys-Gly) (interchain with G-Cter in SUMO2).

Interacts with POLD2. Interacts with NCBP1 and EIF4A3. Associates with the multiprotein exon junction complex (EJC). Interacts with RPS6KB1 (activated). Interacts with ERH. Interacts with THOC2, DDX39B and ZC3H11A; the interactions are ATP-dependent and indicative for an association with the TREX complex. In terms of processing, phosphorylated at Ser-383 and Ser-385 by RPS6KB1.

Its subcellular location is the nucleus. It localises to the nucleus speckle. The protein localises to the cytoplasm. In terms of biological role, is involved in regulation of translation. Is preferentially associated with CBC-bound spliced mRNA-protein complexes during the pioneer round of mRNA translation. Contributes to enhanced translational efficiency of spliced over nonspliced mRNAs. Recruits activated ribosomal protein S6 kinase beta-1 I/RPS6KB1 to newly synthesized mRNA. Involved in nuclear mRNA export; probably mediated by association with the TREX complex. This chain is Polymerase delta-interacting protein 3 (POLDIP3), found in Homo sapiens (Human).